Consider the following 686-residue polypeptide: Phosphomethylpyrimidine synthase (686 aa).

Residues asparagine 235, methionine 264, tyrosine 293, histidine 329, 349–351, 390–393, and glutamate 429 contribute to the substrate site; these read SRG and DGMR. A Zn(2+)-binding site is contributed by histidine 433. A substrate-binding site is contributed by tyrosine 456. Zn(2+) is bound at residue histidine 497. [4Fe-4S] cluster-binding residues include cysteine 577, cysteine 580, and cysteine 585. The interval 659 to 686 is disordered; it reads IDSSGINDNKNDQQDASVVRVPSLEIEG.

Belongs to the ThiC family. As to quaternary structure, homodimer. [4Fe-4S] cluster serves as cofactor.

It catalyses the reaction 5-amino-1-(5-phospho-beta-D-ribosyl)imidazole + S-adenosyl-L-methionine = 4-amino-2-methyl-5-(phosphooxymethyl)pyrimidine + CO + 5'-deoxyadenosine + formate + L-methionine + 3 H(+). It participates in cofactor biosynthesis; thiamine diphosphate biosynthesis. Functionally, catalyzes the synthesis of the hydroxymethylpyrimidine phosphate (HMP-P) moiety of thiamine from aminoimidazole ribotide (AIR) in a radical S-adenosyl-L-methionine (SAM)-dependent reaction. The protein is Phosphomethylpyrimidine synthase of Shewanella denitrificans (strain OS217 / ATCC BAA-1090 / DSM 15013).